We begin with the raw amino-acid sequence, 267 residues long: Matrilysin (267 aa).

An N-terminal signal peptide occupies residues 1-17; that stretch reads MRLTVLCAVCLLPGSLA. Positions 18-94 are cleaved as a propeptide — activation peptide; sequence LPLPQEAGGM…PRCGVPDVAE (77 aa). Residues 85-92 carry the Cysteine switch motif; it reads PRCGVPDV. Cys87 contributes to the Zn(2+) binding site. Position 153 (Asp153) interacts with Ca(2+). His163 and Asp165 together coordinate Zn(2+). Positions 170, 171, 173, and 175 each coordinate Ca(2+). His178 provides a ligand contact to Zn(2+). Residues Gly185, Gly187, and Asp189 each contribute to the Ca(2+) site. His191 provides a ligand contact to Zn(2+). The Ca(2+) site is built by Asp193 and Glu196. His214 lines the Zn(2+) pocket. The active site involves Glu215. Residues His218 and His224 each contribute to the Zn(2+) site.

It belongs to the peptidase M10A family. Requires Ca(2+) as cofactor. Zn(2+) serves as cofactor.

The protein resides in the secreted. Its subcellular location is the extracellular space. The protein localises to the extracellular matrix. It carries out the reaction Cleavage of 14-Ala-|-Leu-15 and 16-Tyr-|-Leu-17 in B chain of insulin. No action on collagen types I, II, IV, V. Cleaves gelatin chain alpha2(I) &gt; alpha1(I).. In terms of biological role, degrades casein, gelatins of types I, III, IV, and V, and fibronectin. Activates procollagenase. The chain is Matrilysin (MMP7) from Homo sapiens (Human).